Here is a 122-residue protein sequence, read N- to C-terminus: High-potential iron-sulfur protein (122 aa).

Positions 1 to 37 are cleaved as a signal peptide; the sequence is MSDKPISKSRRDAVKVMLGTAAAIPMINLVGFGTARA. The [4Fe-4S] cluster site is built by cysteine 80, cysteine 83, cysteine 100, and cysteine 114.

The protein belongs to the high-potential iron-sulfur protein (HiPIP) family. As to quaternary structure, homodimer.

Its subcellular location is the periplasm. Specific class of high-redox-potential 4Fe-4S ferredoxins. Functions in anaerobic electron transport in most purple and in some other photosynthetic bacteria and in at least one genus (Paracoccus) of halophilic, denitrifying bacteria. This is High-potential iron-sulfur protein (hip) from Allochromatium vinosum (strain ATCC 17899 / DSM 180 / NBRC 103801 / NCIMB 10441 / D) (Chromatium vinosum).